A 1201-amino-acid polypeptide reads, in one-letter code: Transcription-repair-coupling factor (1201 aa).

Residues 1-27 (MRLLITLGPSGSTHGHSLHTDAGRRRG) form a disordered region. Residues 670–831 (DMQKPEPMDR…MSGVRDMSII (162 aa)) enclose the Helicase ATP-binding domain. Position 683–690 (683–690 (GDVGYGKT)) interacts with ATP. Residues 784–787 (DEEQ) carry the DEEQ box motif. In terms of domain architecture, Helicase C-terminal spans 852 to 1006 (VVKEAIEREV…GFSIASHDLE (155 aa)).

The protein in the N-terminal section; belongs to the UvrB family. This sequence in the C-terminal section; belongs to the helicase family. RecG subfamily.

The protein resides in the cytoplasm. Functionally, couples transcription and DNA repair by recognizing RNA polymerase (RNAP) stalled at DNA lesions. Mediates ATP-dependent release of RNAP and its truncated transcript from the DNA, and recruitment of nucleotide excision repair machinery to the damaged site. This is Transcription-repair-coupling factor from Myxococcus xanthus.